The primary structure comprises 312 residues: Polyprenyl transferase atnF (312 aa).

A glycan (N-linked (GlcNAc...) asparagine) is linked at Asn-9. Transmembrane regions (helical) follow at residues 30-50, 64-84, 111-131, 132-152, 154-174, 185-205, 229-249, 255-275, and 288-308; these read LHTIEGLSTASIGWLALFFYA, FIGIFATYQMTHCVFCLWNDI, AMWVFVLGVFASMGVTYWLLG, ADVTLTMVPIWVLSFIYPLCK, IIWAPQVVLGLTMALCVLPPW, GLLPASLFGAIFCWLVYLDLI, YLKAGLTVLGVLQVVCFVLAA, GFLLWVFGIAVWSASVPWSIM, and IFLVNAILGIYMAAVSGLNVS.

This sequence belongs to the UbiA prenyltransferase family. Requires Mg(2+) as cofactor.

The protein localises to the membrane. The protein operates within secondary metabolite biosynthesis; terpenoid biosynthesis. Its function is as follows. Polyprenyl transferase; part of the gene cluster that mediates the biosynthesis of the meroterpenoids arthripenoids. The pathway begins with the HR-PKS atnH that catalyzes two chain-extension steps to form a reduced triketide, which then primes the SAT domain in the NR-PKS atnG to initiate three more cycles of extension to give a linear hexaketide corresponding to the polyketide part of arthripenoids. The FAD-dependent monooxygenase atnJ then performs an oxidative decarboxylation at C11 of the atnH/atnG product, via an electrophilic aromatic hydroxylation with concomitant ipso-decarboxylation. The membrane-bound polyprenyl transferase atnF then introduces a farnesyl group before the FAD-dependent monooxygenase atnK functions as the first epoxidase on terminal C12'-C13' olefin, followed by a second epoxidation on C7'-C8' catalyzed by atnA. The terpene cyclase/mutase atnI then initiates the sequential tricyclic ring formation through protonation of the terminal epoxide and catalyzes the regioselective and stereoselective 6/6/6-tricyclic ring formation. The cytochrome P450 monooxygenase atnM is responsible for hydroxylating both C1' and C10'. The next steps may involve ketoreduction and acetyl transfer by the ketoreductase atnB and the acetyltransferase atnC, and lead to the production of arthripenoid B, the final biosynthetic product of the atn cluster. The hydroquinone moiety in arthripenoid B is prone to undergo spontaneous oxidation to afford a benzoquinone compound, a key intermediate for generating structure diversity. For instance, addition of a cysteine followed by ring contraction gives arthripenoid A, tautomerization gives the main product arthripenoid C, addition of a molecular of water or amine affords arthripenoid D or E, respectively, and loss of one water forms arthripenoid F. The chain is Polyprenyl transferase atnF from Arthrinium sp.